We begin with the raw amino-acid sequence, 72 residues long: Large ribosomal subunit protein uL29 (72 aa).

It belongs to the universal ribosomal protein uL29 family.

The chain is Large ribosomal subunit protein uL29 from Thermodesulfovibrio yellowstonii (strain ATCC 51303 / DSM 11347 / YP87).